The chain runs to 474 residues: JmjC domain-containing protein F (474 aa).

The interval 247–269 (KTKKQQQQQQTTTTTANNDNDNS) is disordered. Residues 251 to 261 (QQQQQQTTTTT) show a composition bias toward low complexity. A JmjC domain is found at 305-474 (AYLAQHGLIE…LSLSFWFIKK (170 aa)).

The sequence is that of JmjC domain-containing protein F (jcdF) from Dictyostelium discoideum (Social amoeba).